Here is a 937-residue protein sequence, read N- to C-terminus: Putative diacylglycerol kinase K06A1.6 (937 aa).

Disordered regions lie at residues 44 to 69 (PPRK…SSRA) and 106 to 145 (SNDS…STNN). Residues 116-129 (VSVSSESSWSSASD) show a composition bias toward low complexity. The 138-residue stretch at 414-551 (GPSQPLLVFV…LDRWRIDVEP (138 aa)) folds into the DAGKc domain.

It belongs to the eukaryotic diacylglycerol kinase family.

It catalyses the reaction a 1,2-diacyl-sn-glycerol + ATP = a 1,2-diacyl-sn-glycero-3-phosphate + ADP + H(+). The sequence is that of Putative diacylglycerol kinase K06A1.6 (dgk-5) from Caenorhabditis elegans.